The chain runs to 337 residues: Glyceraldehyde-3-phosphate dehydrogenase (337 aa).

Residues 12-13 (RI), aspartate 34, and arginine 79 contribute to the NAD(+) site. Residues 150 to 152 (SCT), threonine 181, 210 to 211 (TG), and arginine 233 each bind D-glyceraldehyde 3-phosphate. The Nucleophile role is filled by cysteine 151. Asparagine 315 serves as a coordination point for NAD(+).

The protein belongs to the glyceraldehyde-3-phosphate dehydrogenase family. Homotetramer.

It is found in the cytoplasm. It catalyses the reaction D-glyceraldehyde 3-phosphate + phosphate + NAD(+) = (2R)-3-phospho-glyceroyl phosphate + NADH + H(+). It functions in the pathway carbohydrate degradation; glycolysis; pyruvate from D-glyceraldehyde 3-phosphate: step 1/5. The polypeptide is Glyceraldehyde-3-phosphate dehydrogenase (GPD) (Ajellomyces capsulatus (Darling's disease fungus)).